A 231-amino-acid chain; its full sequence is Small ribosomal subunit protein uS3 (231 aa).

A KH type-2 domain is found at Val-18–Ala-97.

Belongs to the universal ribosomal protein uS3 family. Part of the 30S ribosomal subunit.

Binds the lower part of the 30S subunit head. This is Small ribosomal subunit protein uS3 from Sulfolobus acidocaldarius (strain ATCC 33909 / DSM 639 / JCM 8929 / NBRC 15157 / NCIMB 11770).